The sequence spans 413 residues: Arginine biosynthesis bifunctional protein ArgJ (413 aa).

Residues Thr-158, Lys-184, Thr-195, Glu-285, Asn-408, and Ser-413 each coordinate substrate. Thr-195 (nucleophile) is an active-site residue.

The protein belongs to the ArgJ family. As to quaternary structure, heterotetramer of two alpha and two beta chains.

The protein localises to the cytoplasm. It catalyses the reaction N(2)-acetyl-L-ornithine + L-glutamate = N-acetyl-L-glutamate + L-ornithine. It carries out the reaction L-glutamate + acetyl-CoA = N-acetyl-L-glutamate + CoA + H(+). It participates in amino-acid biosynthesis; L-arginine biosynthesis; L-ornithine and N-acetyl-L-glutamate from L-glutamate and N(2)-acetyl-L-ornithine (cyclic): step 1/1. The protein operates within amino-acid biosynthesis; L-arginine biosynthesis; N(2)-acetyl-L-ornithine from L-glutamate: step 1/4. Functionally, catalyzes two activities which are involved in the cyclic version of arginine biosynthesis: the synthesis of N-acetylglutamate from glutamate and acetyl-CoA as the acetyl donor, and of ornithine by transacetylation between N(2)-acetylornithine and glutamate. This Rhizobium meliloti (strain 1021) (Ensifer meliloti) protein is Arginine biosynthesis bifunctional protein ArgJ.